Here is a 476-residue protein sequence, read N- to C-terminus: Aspartyl/glutamyl-tRNA(Asn/Gln) amidotransferase subunit B (476 aa).

Belongs to the GatB/GatE family. GatB subfamily. In terms of assembly, heterotrimer of A, B and C subunits.

It catalyses the reaction L-glutamyl-tRNA(Gln) + L-glutamine + ATP + H2O = L-glutaminyl-tRNA(Gln) + L-glutamate + ADP + phosphate + H(+). The catalysed reaction is L-aspartyl-tRNA(Asn) + L-glutamine + ATP + H2O = L-asparaginyl-tRNA(Asn) + L-glutamate + ADP + phosphate + 2 H(+). Functionally, allows the formation of correctly charged Asn-tRNA(Asn) or Gln-tRNA(Gln) through the transamidation of misacylated Asp-tRNA(Asn) or Glu-tRNA(Gln) in organisms which lack either or both of asparaginyl-tRNA or glutaminyl-tRNA synthetases. The reaction takes place in the presence of glutamine and ATP through an activated phospho-Asp-tRNA(Asn) or phospho-Glu-tRNA(Gln). The sequence is that of Aspartyl/glutamyl-tRNA(Asn/Gln) amidotransferase subunit B from Variovorax paradoxus (strain S110).